Consider the following 115-residue polypeptide: U3-lycotoxin-Ls1d (115 aa).

Residues 1–20 (MKFVLLFGVLLVTLFSYSSA) form the signal peptide. The propeptide occupies 21 to 44 (EMLDDFDQADEDELLSLIEKEEAR). 4 disulfides stabilise this stretch: Cys48–Cys63, Cys55–Cys72, Cys62–Cys87, and Cys74–Cys85.

Belongs to the neurotoxin 19 (CSTX) family. 01 subfamily. Expressed by the venom gland.

It is found in the secreted. The protein is U3-lycotoxin-Ls1d of Lycosa singoriensis (Wolf spider).